The primary structure comprises 641 residues: Leucine-rich repeat receptor-like serine/threonine/tyrosine-protein kinase SOBIR1 (641 aa).

The signal sequence occupies residues 1–31; it reads MAVPTGSANLFLRPLILAVLSFLLLSSFVSS. Residues 32 to 284 lie on the Extracellular side of the membrane; it reads VEWLDIDSSD…KKKKSKKKKV (253 aa). 5 LRR repeats span residues 112 to 133, 136 to 159, 160 to 182, 183 to 205, and 207 to 228; these read ELKE…DILS, QLEV…SSLS, RLRI…KNLR, NLEN…IVSF, and NLRF…VMSS. N-linked (GlcNAc...) asparagine glycosylation is present at Asn-154. A glycan (N-linked (GlcNAc...) asparagine) is linked at Asn-186. The segment at 243-278 is disordered; the sequence is AETPTSSPTNKPNNSTTSKAPKGAPKPGKLKKKKKK. Residues 245–259 show a composition bias toward polar residues; sequence TPTSSPTNKPNNSTT. Asn-256 is a glycosylation site (N-linked (GlcNAc...) asparagine). The span at 260–269 shows a compositional bias: low complexity; that stretch reads SKAPKGAPKP. The chain crosses the membrane as a helical span at residues 285-305; sequence AAWILGFVVGAIGGTISGFVF. Residues 306–641 lie on the Cytoplasmic side of the membrane; that stretch reads SVLFKLIIQA…VRTMLSQIKH (336 aa). In terms of domain architecture, Protein kinase spans 347 to 641; the sequence is LASLEIIGRG…VRTMLSQIKH (295 aa). Residues 353 to 361 and Lys-377 contribute to the ATP site; that span reads IGRGGCGEV. Asp-489 acts as the Proton acceptor in catalysis.

This sequence belongs to the protein kinase superfamily. Ser/Thr protein kinase family. As to quaternary structure, interacts with CST. Interacts with RLP23. Component of a trimeric complex composed of RLP23, SOBIR1 and BAK1. BAK1 is recruited into a pre-formed RLP23-SOBIR1 complex in a ligand-dependent manner. In terms of processing, autophosphorylated on Ser, Thr and Tyr residues. As to expression, mostly present in leaves and flowers, with increasing expression in older flowers.

The protein localises to the cell membrane. It carries out the reaction L-seryl-[protein] + ATP = O-phospho-L-seryl-[protein] + ADP + H(+). The catalysed reaction is L-threonyl-[protein] + ATP = O-phospho-L-threonyl-[protein] + ADP + H(+). It catalyses the reaction L-tyrosyl-[protein] + ATP = O-phospho-L-tyrosyl-[protein] + ADP + H(+). Its function is as follows. Dual specificity kinase acting on both serine/threonine- and tyrosine-containing substrates. Acting as a counterplayer of BIR1, promotes the activation of plant defense and cell death. Component of the RLP23-SOBIR1-BAK1 complex that mediates NLP-triggered immunity. Functions as an inhibitor/regulator of abscission, probably by regulating membrane trafficking during abscission. In Arabidopsis thaliana (Mouse-ear cress), this protein is Leucine-rich repeat receptor-like serine/threonine/tyrosine-protein kinase SOBIR1 (SOBIR1).